A 609-amino-acid polypeptide reads, in one-letter code: Glutamine--fructose-6-phosphate aminotransferase [isomerizing] (609 aa).

The active-site Nucleophile; for GATase activity is Cys-2. The region spanning 2-219 (CGIVGYIGGR…DGECARLTRD (218 aa)) is the Glutamine amidotransferase type-2 domain. SIS domains are found at residues 285–424 (SSDL…LRGT) and 458–599 (LARE…VDQP). Residue Lys-604 is the For Fru-6P isomerization activity of the active site.

As to quaternary structure, homodimer.

The protein localises to the cytoplasm. The enzyme catalyses D-fructose 6-phosphate + L-glutamine = D-glucosamine 6-phosphate + L-glutamate. Its function is as follows. Catalyzes the first step in hexosamine metabolism, converting fructose-6P into glucosamine-6P using glutamine as a nitrogen source. This chain is Glutamine--fructose-6-phosphate aminotransferase [isomerizing], found in Gloeobacter violaceus (strain ATCC 29082 / PCC 7421).